The primary structure comprises 264 residues: Heavy metal-associated isoprenylated plant protein 17 (264 aa).

HMA domains lie at 32–95 and 133–204; these read VTDA…KKIE and IMEV…KERQ. A coiled-coil region spans residues 185 to 218; the sequence is SRKLNKKMHQKIKKAEKERQEWESEMMLREAEEE. Residue Cys-261 is modified to Cysteine methyl ester. Cys-261 carries S-farnesyl cysteine lipidation. Positions 262-264 are cleaved as a propeptide — removed in mature form; it reads SIS.

Belongs to the HIPP family.

Its function is as follows. Probable heavy-metal-binding protein. This Arabidopsis thaliana (Mouse-ear cress) protein is Heavy metal-associated isoprenylated plant protein 17.